The following is a 183-amino-acid chain: Beta-defensin 129 (183 aa).

Positions 1–19 (MKLLFPIFASLMLQYQVNT) are cleaved as a signal peptide. Cystine bridges form between Cys-27-Cys-53, Cys-34-Cys-48, and Cys-38-Cys-54. Residues 141–183 (TATSTKSNTKESRDSATASPPPAPPPPNILPTPSLELEEAEEQ) are disordered. Pro residues predominate over residues 159–170 (SPPPAPPPPNIL).

It belongs to the beta-defensin family.

The protein localises to the secreted. Its function is as follows. Has antibacterial activity. The sequence is that of Beta-defensin 129 (DEFB129) from Pan troglodytes (Chimpanzee).